Reading from the N-terminus, the 607-residue chain is Polyphenol oxidase, chloroplastic (607 aa).

The N-terminal 103 residues, 1-103, are a transit peptide targeting the chloroplast; that stretch reads MASLPWSLTT…LGATKPLAFG (103 aa). The disordered stretch occupies residues 39–73; it reads RNRSRRFAPSKVSCNSANGDPNSDSTSDVRETSSG. Over residues 50–64 the composition is skewed to polar residues; it reads VSCNSANGDPNSDST. Cystine bridges form between C114–C129 and C128–C191. H190, H211, H220, H342, H346, and H375 together coordinate Cu cation. Residues 194–211 constitute a cross-link (2'-(S-cysteinyl)-histidine (Cys-His)); sequence CQGAYDQVGYTDLELQVH.

The protein belongs to the tyrosinase family. The cofactor is Cu(2+).

The protein resides in the plastid. Its subcellular location is the chloroplast thylakoid lumen. The enzyme catalyses 2 catechol + O2 = 2 1,2-benzoquinone + 2 H2O. In terms of biological role, catalyzes the oxidation of mono- and o-diphenols to o-diquinones. This is Polyphenol oxidase, chloroplastic from Vitis vinifera (Grape).